A 509-amino-acid polypeptide reads, in one-letter code: Putative (R)-citramalate synthase CimA (509 aa).

Positions 14–267 (VRIFDTTLRD…DTGIRTERLT (254 aa)) constitute a Pyruvate carboxyltransferase domain.

The protein belongs to the alpha-IPM synthase/homocitrate synthase family. In terms of assembly, homodimer.

It catalyses the reaction pyruvate + acetyl-CoA + H2O = (3R)-citramalate + CoA + H(+). The protein operates within amino-acid biosynthesis; L-isoleucine biosynthesis; 2-oxobutanoate from pyruvate: step 1/3. Catalyzes the condensation of pyruvate and acetyl-coenzyme A to form (R)-citramalate. The chain is Putative (R)-citramalate synthase CimA (cimA) from Methanopyrus kandleri (strain AV19 / DSM 6324 / JCM 9639 / NBRC 100938).